We begin with the raw amino-acid sequence, 156 residues long: MAPKAKKEAPAPPKAEAKAKALKAKKAVLKGVHSHKKKKIRTSPTFRRPKTLRLRRQPKYPRKSAPRRNKLDHYAIIKFPLTTESAMKKIEDNNTLVFIVDVKANKHQIKQAVKKLYDIDVAKVNTLIRPDGEKKAYVRLAPDYDALDVANKIGII.

The span at 1-19 shows a compositional bias: basic and acidic residues; it reads MAPKAKKEAPAPPKAEAKA. The tract at residues 1-67 is disordered; that stretch reads MAPKAKKEAP…PKYPRKSAPR (67 aa). A N,N,N-trimethylalanine modification is found at A2. K14 is covalently cross-linked (Glycyl lysine isopeptide (Lys-Gly) (interchain with G-Cter in SUMO2)). Residues 20 to 67 show a composition bias toward basic residues; sequence KALKAKKAVLKGVHSHKKKKIRTSPTFRRPKTLRLRRQPKYPRKSAPR. Residues 32–74 form a beta-like import receptor binding (BIB) domain region; the sequence is VHSHKKKKIRTSPTFRRPKTLRLRRQPKYPRKSAPRRNKLDHY. R41 carries the citrulline modification. S43 carries the post-translational modification Phosphoserine. T45 is subject to Phosphothreonine. K70 bears the N6-acetyllysine mark.

This sequence belongs to the universal ribosomal protein uL23 family. As to quaternary structure, component of the large ribosomal subunit. Interacts with LYAR and GNL2. Interacts with MDM2; this interaction may promote MDM2-mediated p53/TP53 polyubiquitination. Directly interacts (via BIB domain) with IPO5, IPO7, KPNB1 and TNPO1; these interactions are involved in RPL23A nuclear import for the assembly of ribosomal subunits. Interacts with IPO8. In terms of processing, N-terminus is methylated by METTL11A/NTM1. Citrullinated by PADI4.

The protein resides in the cytoplasm. It localises to the nucleus. Functionally, component of the large ribosomal subunit. The ribosome is a large ribonucleoprotein complex responsible for the synthesis of proteins in the cell. Binds a specific region on the 26S rRNA. May promote p53/TP53 degradation possibly through the stimulation of MDM2-mediated TP53 polyubiquitination. The sequence is that of Large ribosomal subunit protein uL23 (RPL23A) from Bos taurus (Bovine).